Consider the following 75-residue polypeptide: Molt-inhibiting hormone (75 aa).

3 cysteine pairs are disulfide-bonded: cysteine 7–cysteine 44, cysteine 24–cysteine 40, and cysteine 27–cysteine 53. Alanine 75 is subject to Alanine amide.

It belongs to the arthropod CHH/MIH/GIH/VIH hormone family.

It is found in the secreted. Its function is as follows. Inhibits Y-organs where molting hormone (ecdysteroid) is secreted. A molting cycle is initiated when MIH secretion diminishes or stops. The chain is Molt-inhibiting hormone from Procambarus clarkii (Red swamp crayfish).